Consider the following 215-residue polypeptide: Soluble inorganic pyrophosphatase (215 aa).

The span at 1–21 (MSQEDSTSAAAAQQPTSRPAP) shows a compositional bias: low complexity. The interval 1 to 24 (MSQEDSTSAAAAQQPTSRPAPKLN) is disordered. Mg(2+)-binding residues include aspartate 103, aspartate 108, and aspartate 140.

This sequence belongs to the PPase family. Mg(2+) serves as cofactor. In terms of tissue distribution, expressed in metabolically active tissue such as root, shoot, embryo and aleurone.

The protein localises to the cytoplasm. It catalyses the reaction diphosphate + H2O = 2 phosphate + H(+). In terms of biological role, may play a role in germination. The sequence is that of Soluble inorganic pyrophosphatase (IPP) from Hordeum vulgare subsp. vulgare (Domesticated barley).